The following is a 356-amino-acid chain: 7,8-didemethyl-8-hydroxy-5-deazariboflavin synthase (356 aa).

The region spanning 40–280 is the Radical SAM core domain; the sequence is ITYSKNVFIP…KDISIQVPPN (241 aa). The [4Fe-4S] cluster site is built by C54, C58, and C61.

This sequence belongs to the radical SAM superfamily. CofG family. In terms of assembly, consists of two subunits, CofG and CofH. The cofactor is [4Fe-4S] cluster.

It carries out the reaction 5-amino-5-(4-hydroxybenzyl)-6-(D-ribitylimino)-5,6-dihydrouracil + S-adenosyl-L-methionine = 7,8-didemethyl-8-hydroxy-5-deazariboflavin + 5'-deoxyadenosine + L-methionine + NH4(+) + H(+). It functions in the pathway cofactor biosynthesis; coenzyme F0 biosynthesis. Its function is as follows. Catalyzes the radical-mediated synthesis of 7,8-didemethyl-8-hydroxy-5-deazariboflavin from 5-amino-5-(4-hydroxybenzyl)-6-(D-ribitylimino)-5,6-dihydrouracil. The polypeptide is 7,8-didemethyl-8-hydroxy-5-deazariboflavin synthase (Methanococcus aeolicus (strain ATCC BAA-1280 / DSM 17508 / OCM 812 / Nankai-3)).